The chain runs to 374 residues: tRNA-specific 2-thiouridylase MnmA (374 aa).

Residues 13–20 (GMSGGVDS) and Met39 each bind ATP. Residues 99–101 (NPD) form an interaction with target base in tRNA region. The Nucleophile role is filled by Cys104. A disulfide bridge connects residues Cys104 and Cys201. An ATP-binding site is contributed by Gly128. An interaction with tRNA region spans residues 151–153 (KDQ). Cys201 serves as the catalytic Cysteine persulfide intermediate. Positions 313-314 (RY) are interaction with tRNA.

This sequence belongs to the MnmA/TRMU family.

Its subcellular location is the cytoplasm. It catalyses the reaction S-sulfanyl-L-cysteinyl-[protein] + uridine(34) in tRNA + AH2 + ATP = 2-thiouridine(34) in tRNA + L-cysteinyl-[protein] + A + AMP + diphosphate + H(+). Catalyzes the 2-thiolation of uridine at the wobble position (U34) of tRNA, leading to the formation of s(2)U34. The sequence is that of tRNA-specific 2-thiouridylase MnmA from Streptococcus equi subsp. zooepidemicus (strain MGCS10565).